A 1131-amino-acid polypeptide reads, in one-letter code: DNA polymerase II large subunit (1131 aa).

Belongs to the archaeal DNA polymerase II family. As to quaternary structure, heterodimer of a large subunit and a small subunit.

It carries out the reaction DNA(n) + a 2'-deoxyribonucleoside 5'-triphosphate = DNA(n+1) + diphosphate. The enzyme catalyses Exonucleolytic cleavage in the 3'- to 5'-direction to yield nucleoside 5'-phosphates.. Possesses two activities: a DNA synthesis (polymerase) and an exonucleolytic activity that degrades single-stranded DNA in the 3'- to 5'-direction. Has a template-primer preference which is characteristic of a replicative DNA polymerase. The protein is DNA polymerase II large subunit of Methanococcus maripaludis (strain C5 / ATCC BAA-1333).